A 162-amino-acid chain; its full sequence is MMAKFPITDQGFEKLEHELKHLKHVERKKVSEDIAEARAHGDLSENAEYEAAREKQAFVEARIKHLEDITARAEIINVAKLSGDSIKFGATVVLIDDETEEEVMYHIVGEYEADITKKRVSIASPIAKALIGKSVGDIVEVMTPGGVKSYEVVTIKYEELVF.

Positions 44 to 69 (SENAEYEAAREKQAFVEARIKHLEDI) form a coiled coil.

Belongs to the GreA/GreB family.

Functionally, necessary for efficient RNA polymerase transcription elongation past template-encoded arresting sites. The arresting sites in DNA have the property of trapping a certain fraction of elongating RNA polymerases that pass through, resulting in locked ternary complexes. Cleavage of the nascent transcript by cleavage factors such as GreA or GreB allows the resumption of elongation from the new 3'terminus. GreA releases sequences of 2 to 3 nucleotides. The polypeptide is Transcription elongation factor GreA (Rickettsia bellii (strain RML369-C)).